Here is a 315-residue protein sequence, read N- to C-terminus: ATP synthase gamma chain (315 aa).

Belongs to the ATPase gamma chain family. In terms of assembly, F-type ATPases have 2 components, CF(1) - the catalytic core - and CF(0) - the membrane proton channel. CF(1) has five subunits: alpha(3), beta(3), gamma(1), delta(1), epsilon(1). CF(0) has three main subunits: a, b and c.

It is found in the cell membrane. Functionally, produces ATP from ADP in the presence of a proton gradient across the membrane. The gamma chain is believed to be important in regulating ATPase activity and the flow of protons through the CF(0) complex. In Latilactobacillus sakei subsp. sakei (strain 23K) (Lactobacillus sakei subsp. sakei), this protein is ATP synthase gamma chain.